The chain runs to 360 residues: Phospho-N-acetylmuramoyl-pentapeptide-transferase (360 aa).

Residues 1-25 (MLVWLAEHLVKYYSGFNVFSYLTFR) are Periplasmic-facing. A helical transmembrane segment spans residues 26 to 46 (AIVSLLTALFISLWMGPRMIA). Over 47 to 71 (RLQKLSFGQVVRNDGPESHFSKRGT) the chain is Cytoplasmic. A helical membrane pass occupies residues 72-92 (PTMGGIMILTAIVISVLLWAY). Pro93 is a topological domain (periplasmic). A helical transmembrane segment spans residues 94-114 (SNPYVWCVLVVLIGYGIIGFV). At 115 to 131 (DDYRKVVRKDTKGLIAR) the chain is on the cytoplasmic side. Residues 132-152 (WKYFWMSVIALGVAFALYLVG) form a helical membrane-spanning segment. Topologically, residues 153–167 (KDTPVTQLVVPFFKD) are periplasmic. Residues 168 to 188 (VMPQLGLFYILLSYFVIVGTG) form a helical membrane-spanning segment. At 189 to 198 (NAVNLTDGLD) the chain is on the cytoplasmic side. The chain crosses the membrane as a helical span at residues 199–219 (GLAIMPTVFVAAGFALVAWAT). Topologically, residues 220–235 (GNMNFANYLHIPYLRH) are periplasmic. The helical transmembrane segment at 236–256 (AGELVIVCTAIVGAGLGFLWF) threads the bilayer. Over 257-262 (NTYPAQ) the chain is Cytoplasmic. The chain crosses the membrane as a helical span at residues 263–283 (VFMGDVGSLALGGALGIIAVL). The Periplasmic segment spans residues 284 to 287 (LRQE). Residues 288-308 (FLLVIMGGVFVVETLSVILQV) form a helical membrane-spanning segment. Residues 309-337 (GSFKLRGQRIFRMAPIHHHYELKGWPEPR) lie on the Cytoplasmic side of the membrane. Residues 338 to 358 (VIVRFWIISLMLVLIGLATLK) traverse the membrane as a helical segment. The Periplasmic segment spans residues 359–360 (VR).

Belongs to the glycosyltransferase 4 family. MraY subfamily. It depends on Mg(2+) as a cofactor.

The protein localises to the cell inner membrane. The catalysed reaction is UDP-N-acetyl-alpha-D-muramoyl-L-alanyl-gamma-D-glutamyl-meso-2,6-diaminopimeloyl-D-alanyl-D-alanine + di-trans,octa-cis-undecaprenyl phosphate = di-trans,octa-cis-undecaprenyl diphospho-N-acetyl-alpha-D-muramoyl-L-alanyl-D-glutamyl-meso-2,6-diaminopimeloyl-D-alanyl-D-alanine + UMP. The protein operates within cell wall biogenesis; peptidoglycan biosynthesis. Catalyzes the initial step of the lipid cycle reactions in the biosynthesis of the cell wall peptidoglycan: transfers peptidoglycan precursor phospho-MurNAc-pentapeptide from UDP-MurNAc-pentapeptide onto the lipid carrier undecaprenyl phosphate, yielding undecaprenyl-pyrophosphoryl-MurNAc-pentapeptide, known as lipid I. The polypeptide is Phospho-N-acetylmuramoyl-pentapeptide-transferase (Salmonella paratyphi C (strain RKS4594)).